Consider the following 593-residue polypeptide: Scarecrow-like protein 1 (593 aa).

Disordered stretches follow at residues 29–61 (NPKLYTLNENGNNNGVSSAQIFDPDRSKNPCLT) and 188–216 (YQNESEQHQDSPKESSSADSNSHVSSKEV). Positions 35-48 (LNENGNNNGVSSAQ) are enriched in polar residues. A compositionally biased stretch (low complexity) spans 202–211 (SSSADSNSHV). Positions 213 to 593 (SKEVVSQATP…KSLIVASAWR (381 aa)) constitute a GRAS domain. The segment at 220-280 (ATPKQILISC…AARMAASGKF (61 aa)) is leucine repeat I (LRI). A VHIID region spans residues 299 to 364 (MQVLFEVCPC…GKRPRLRLTG (66 aa)). The VHIID signature appears at 330 to 334 (VHIID). Residues 380 to 411 (IIGLRLEQLAEDNGVSFKFKAMPSKTSIVSPS) are leucine repeat II (LRII). Positions 421–515 (LIVNFAFQLH…RQCLARDIVN (95 aa)) are PFYRE. The tract at residues 518–593 (ACEGEERIER…KSLIVASAWR (76 aa)) is SAW.

The protein belongs to the GRAS family. Expressed in seedlings, roots, shoots, leaves, flowers and siliques.

The protein resides in the nucleus. Probable transcription factor involved in plant development. This is Scarecrow-like protein 1 (SCL1) from Arabidopsis thaliana (Mouse-ear cress).